Reading from the N-terminus, the 653-residue chain is Thioredoxin domain-containing protein 3 homolog (653 aa).

A Thioredoxin domain is found at leucine 9–asparagine 114. Cysteine 38 and cysteine 41 are disulfide-bonded. The segment at lysine 155–threonine 299 is NDK 1. Residues tyrosine 300–arginine 323 form a disordered region. Over residues arginine 301–alanine 310 the composition is skewed to low complexity. 2 NDK regions span residues leucine 324–valine 459 and valine 459–tryptophan 597. The tract at residues glutamine 603–glutamate 653 is disordered. Residues proline 617 to glutamate 633 show a composition bias toward acidic residues.

In the C-terminal section; belongs to the NDK family. As to expression, testis-specific.

Functionally, may be required during the final stages of sperm tail maturation. May act by reducing disulfide bonds within the sperm components. The chain is Thioredoxin domain-containing protein 3 homolog (CiIC3) from Ciona intestinalis (Transparent sea squirt).